We begin with the raw amino-acid sequence, 142 residues long: Large ribosomal subunit protein uL11 (142 aa).

The protein belongs to the universal ribosomal protein uL11 family. As to quaternary structure, part of the ribosomal stalk of the 50S ribosomal subunit. Interacts with L10 and the large rRNA to form the base of the stalk. L10 forms an elongated spine to which L12 dimers bind in a sequential fashion forming a multimeric L10(L12)X complex. One or more lysine residues are methylated.

Forms part of the ribosomal stalk which helps the ribosome interact with GTP-bound translation factors. The chain is Large ribosomal subunit protein uL11 from Serratia marcescens.